A 20-amino-acid chain; its full sequence is Catechol 1,2-dioxygenase (20 aa).

The protein belongs to the intradiol ring-cleavage dioxygenase family. As to quaternary structure, homodimer which dissociates into active monomeric subunits at high ionic strengths. The cofactor is Fe(3+).

The enzyme catalyses catechol + O2 = cis,cis-muconate + 2 H(+). It participates in aromatic compound metabolism; beta-ketoadipate pathway; 5-oxo-4,5-dihydro-2-furylacetate from catechol: step 1/3. The chain is Catechol 1,2-dioxygenase from Acinetobacter radioresistens.